The primary structure comprises 197 residues: Casparian strip membrane protein 4 (197 aa).

Topologically, residues 1–34 (MMSSTTIDVPAESSNVAKGKAVLVAAPRPGGWKK) are cytoplasmic. A helical transmembrane segment spans residues 35-55 (GIAIVDFVLRLGAVAAALGAA). The Extracellular portion of the chain corresponds to 56-85 (TTMATADQTLPFFTQFFQFEASYDSFTTFQ). The helical transmembrane segment at 86–106 (FFVITMALVGCYLVLSLPLSI) threads the bilayer. At 107–118 (VSIIRPHALGPK) the chain is on the cytoplasmic side. The helical transmembrane segment at 119–139 (LFLIILDTVFLTLATASAASA) threads the bilayer. Over 140–171 (AAVVYVAHNGNQDSNWLAICNQFGDFCAQTSG) the chain is Extracellular. A helical transmembrane segment spans residues 172–192 (AVVSSLVAVVVFVLLIVMSAL). Topologically, residues 193-197 (ALGKH) are cytoplasmic.

It belongs to the Casparian strip membrane proteins (CASP) family. Homodimer and heterodimers.

The protein localises to the cell membrane. Its function is as follows. Regulates membrane-cell wall junctions and localized cell wall deposition. Required for establishment of the Casparian strip membrane domain (CSD) and the subsequent formation of Casparian strips, a cell wall modification of the root endodermis that determines an apoplastic barrier between the intraorganismal apoplasm and the extraorganismal apoplasm and prevents lateral diffusion. This is Casparian strip membrane protein 4 from Lotus japonicus (Lotus corniculatus var. japonicus).